The sequence spans 336 residues: Holliday junction branch migration complex subunit RuvB (336 aa).

The tract at residues 4 to 184 (SDRLISSQSI…FGIVQRLEYY (181 aa)) is large ATPase domain (RuvB-L). ATP contacts are provided by residues I23, R24, G65, K68, T69, T70, 131–133 (EDY), R174, Y184, and R221. T69 contributes to the Mg(2+) binding site. Residues 185–255 (SVDSLTKIVA…MAQQALEMLE (71 aa)) are small ATPAse domain (RuvB-S). The segment at 258-336 (QHGFDLMDRK…HFGFSAIEQE (79 aa)) is head domain (RuvB-H). The DNA site is built by R313 and R318.

It belongs to the RuvB family. As to quaternary structure, homohexamer. Forms an RuvA(8)-RuvB(12)-Holliday junction (HJ) complex. HJ DNA is sandwiched between 2 RuvA tetramers; dsDNA enters through RuvA and exits via RuvB. An RuvB hexamer assembles on each DNA strand where it exits the tetramer. Each RuvB hexamer is contacted by two RuvA subunits (via domain III) on 2 adjacent RuvB subunits; this complex drives branch migration. In the full resolvosome a probable DNA-RuvA(4)-RuvB(12)-RuvC(2) complex forms which resolves the HJ.

Its subcellular location is the cytoplasm. It catalyses the reaction ATP + H2O = ADP + phosphate + H(+). Its function is as follows. The RuvA-RuvB-RuvC complex processes Holliday junction (HJ) DNA during genetic recombination and DNA repair, while the RuvA-RuvB complex plays an important role in the rescue of blocked DNA replication forks via replication fork reversal (RFR). RuvA specifically binds to HJ cruciform DNA, conferring on it an open structure. The RuvB hexamer acts as an ATP-dependent pump, pulling dsDNA into and through the RuvAB complex. RuvB forms 2 homohexamers on either side of HJ DNA bound by 1 or 2 RuvA tetramers; 4 subunits per hexamer contact DNA at a time. Coordinated motions by a converter formed by DNA-disengaged RuvB subunits stimulates ATP hydrolysis and nucleotide exchange. Immobilization of the converter enables RuvB to convert the ATP-contained energy into a lever motion, pulling 2 nucleotides of DNA out of the RuvA tetramer per ATP hydrolyzed, thus driving DNA branch migration. The RuvB motors rotate together with the DNA substrate, which together with the progressing nucleotide cycle form the mechanistic basis for DNA recombination by continuous HJ branch migration. Branch migration allows RuvC to scan DNA until it finds its consensus sequence, where it cleaves and resolves cruciform DNA. This Legionella pneumophila (strain Paris) protein is Holliday junction branch migration complex subunit RuvB.